A 345-amino-acid chain; its full sequence is MATLSVGEPQEMEVDRRGESEESGDDETKRKSLNGEVDSLQAPSTVPEESPVDMDTITLDPEEEDVDLVHCRIGKIEGLEVLLKAKTISLRQNLIKRIENLESLVSLRELDLYDNQIRKLENLQALTELEQLDVSFNLLRKIEGLDSLTKVKKLFLLHNKIASIANLDHLTSLQMLELGSNRIRVIENLDSLSSLESLFLGTNKITQLQNLDGLHNLTVLSIQSNRITKLEGLQNLVNLRELYLSHNGIEVMEGLENNKKLSTLDIAANRIKKIENISHLTDLKEFWMNDNQIENWADLDELKNAKGLETVYLERNPLQKDPQYRRKIMLALPSVRQIDATFIRF.

Residues 1-53 (MATLSVGEPQEMEVDRRGESEESGDDETKRKSLNGEVDSLQAPSTVPEESPVD) form a disordered region. The segment covering 13-30 (EVDRRGESEESGDDETKR) has biased composition (basic and acidic residues). 11 LRR repeats span residues 62 to 83 (EEEDVDLVHCRIGKIEGLEVLL), 84 to 105 (KAKTISLRQNLIKRIENLESLV), 106 to 127 (SLRELDLYDNQIRKLENLQALT), 128 to 149 (ELEQLDVSFNLLRKIEGLDSLT), 150 to 171 (KVKKLFLLHNKIASIANLDHLT), 172 to 193 (SLQMLELGSNRIRVIENLDSLS), 194 to 215 (SLESLFLGTNKITQLQNLDGLH), 216 to 237 (NLTVLSIQSNRITKLEGLQNLV), 238 to 259 (NLRELYLSHNGIEVMEGLENNK), 260 to 281 (KLSTLDIAANRIKKIENISHLT), and 282 to 303 (DLKEFWMNDNQIENWADLDELK). The region spanning 316 to 345 (NPLQKDPQYRRKIMLALPSVRQIDATFIRF) is the LRRCT domain.

The protein belongs to the SDS22 family.

The protein localises to the nucleus. Regulatory subunit of protein phosphatase 1. The chain is Protein phosphatase 1 regulatory subunit 7 (ppp1r7) from Danio rerio (Zebrafish).